A 121-amino-acid polypeptide reads, in one-letter code: MARIAGVNIPNHQHTEIGLTAIFGVGRTRSRSICVAAGVDFSKKVKDLTDADLEKLREEVGKFVVEGDLRREVTMNIKRLMDLGCYRGVRHRKGLPMRGQRTRTNARTRKGPRRAAQALKK.

Residues 92 to 121 form a disordered region; sequence RKGLPMRGQRTRTNARTRKGPRRAAQALKK.

It belongs to the universal ribosomal protein uS13 family. Part of the 30S ribosomal subunit. Forms a loose heterodimer with protein S19. Forms two bridges to the 50S subunit in the 70S ribosome.

Functionally, located at the top of the head of the 30S subunit, it contacts several helices of the 16S rRNA. In the 70S ribosome it contacts the 23S rRNA (bridge B1a) and protein L5 of the 50S subunit (bridge B1b), connecting the 2 subunits; these bridges are implicated in subunit movement. Contacts the tRNAs in the A and P-sites. In Burkholderia cenocepacia (strain HI2424), this protein is Small ribosomal subunit protein uS13.